A 59-amino-acid polypeptide reads, in one-letter code: Potassium channel toxin alpha-KTx 1.1 (59 aa).

The signal sequence occupies residues 1 to 22 (MKILSVLLLALIICSIVGWSEA). The residue at position 23 (Gln-23) is a Pyrrolidone carboxylic acid. Disulfide bonds link Cys-29-Cys-50, Cys-35-Cys-55, and Cys-39-Cys-57. Positions 48 to 55 (GKCMNKKC) are interaction with Ca(2+)-activated K(+) channels.

This sequence belongs to the short scorpion toxin superfamily. Potassium channel inhibitor family. Alpha-KTx 01 subfamily. In terms of tissue distribution, expressed by the venom gland.

It localises to the secreted. This toxin inhibits numerous potassium channels: shaker (Ki=227 nM), Kv1.2/KCNA2 (nanomolar range), Kv1.3/KCNA3 (nanomolar range), Kv1.5/KCNA5 (Kd&gt;100 nM), Kv1.6/KCNA6 (Ki=22 nM), KCa1.1/KCNMA1 (IC(50)=5.9 nM). It blocks channel activity by a simple bimolecular inhibition process. It also shows a weak interaction with nicotinic acetylcholine receptors (nAChR), suggesting it may weakly inhibit it. It also exhibits pH-specific antimicrobial activities against bacteria (B.subtilis, E.coli and S.aureus) and the fungus C.albicans. In Leiurus hebraeus (Hebrew deathstalker scorpion), this protein is Potassium channel toxin alpha-KTx 1.1.